Consider the following 253-residue polypeptide: FGFR1 oncogene partner 2 (253 aa).

The stretch at Ile5 to Tyr104 forms a coiled coil. Position 141 is a phosphoserine (Ser141). The stretch at Leu160–Glu223 forms a coiled coil. The tract at residues Asp231 to Ser253 is disordered. Residues Glu235–Ser253 show a composition bias toward polar residues.

Belongs to the SIKE family. Expressed in bone marrow, spleen and thymus.

The protein localises to the cytoplasm. May be involved in wound healing pathway. This is FGFR1 oncogene partner 2 (FGFR1OP2) from Homo sapiens (Human).